The sequence spans 216 residues: Twisted gastrulation protein homolog 1-A (216 aa).

A signal peptide spans 1 to 25 (MKPSFLHIPAAALLLCSLWILPIYC). Residues Asn52, Asn81, and Asn145 are each glycosylated (N-linked (GlcNAc...) asparagine).

This sequence belongs to the twisted gastrulation protein family. As to quaternary structure, binds directly to bmp2, bmp4 and bmp7 and can form a ternary complex with bmps and chordin, thus preventing the binding of bmps to their cell surface receptors. In terms of tissue distribution, posterior defects are induced by overexpression. This may arise through alteration of bmp4 or chrd function in the developing tailbud region.

It is found in the secreted. Functionally, involved in dorsal-ventral patterning, permitting peak BMP signaling by antagonizing the residual anti-BMP activity of the cleavage products of chrd. Functions to promote the formation of ventral mesoderm by increasing the activity of bmp7 and other BMPS. Seems to antagonize BMP signaling by forming ternary complexes with chrd and BMPs, thereby preventing BMPs from binding to their receptors. In addition to the anti-BMP function, also has pro-BMP activity, partly mediated by cleavage and degradation of chrd, which releases BMPs from ternary complexes. May be an important modulator of BMP-regulated cartilage development and chondrocyte differentiation. The chain is Twisted gastrulation protein homolog 1-A (twsg1-a) from Xenopus laevis (African clawed frog).